The chain runs to 383 residues: ATP phosphoribosyltransferase regulatory subunit (383 aa).

The protein belongs to the class-II aminoacyl-tRNA synthetase family. HisZ subfamily. Heteromultimer composed of HisG and HisZ subunits.

It is found in the cytoplasm. The protein operates within amino-acid biosynthesis; L-histidine biosynthesis; L-histidine from 5-phospho-alpha-D-ribose 1-diphosphate: step 1/9. Functionally, required for the first step of histidine biosynthesis. May allow the feedback regulation of ATP phosphoribosyltransferase activity by histidine. The protein is ATP phosphoribosyltransferase regulatory subunit of Paraburkholderia phytofirmans (strain DSM 17436 / LMG 22146 / PsJN) (Burkholderia phytofirmans).